We begin with the raw amino-acid sequence, 427 residues long: Serine hydroxymethyltransferase (427 aa).

(6S)-5,6,7,8-tetrahydrofolate-binding positions include leucine 122 and 126–128 (GHL). Lysine 231 bears the N6-(pyridoxal phosphate)lysine mark.

The protein belongs to the SHMT family. In terms of assembly, homodimer. Pyridoxal 5'-phosphate serves as cofactor.

The protein resides in the cytoplasm. It carries out the reaction (6R)-5,10-methylene-5,6,7,8-tetrahydrofolate + glycine + H2O = (6S)-5,6,7,8-tetrahydrofolate + L-serine. It participates in one-carbon metabolism; tetrahydrofolate interconversion. It functions in the pathway amino-acid biosynthesis; glycine biosynthesis; glycine from L-serine: step 1/1. Catalyzes the reversible interconversion of serine and glycine with tetrahydrofolate (THF) serving as the one-carbon carrier. This reaction serves as the major source of one-carbon groups required for the biosynthesis of purines, thymidylate, methionine, and other important biomolecules. Also exhibits THF-independent aldolase activity toward beta-hydroxyamino acids, producing glycine and aldehydes, via a retro-aldol mechanism. The protein is Serine hydroxymethyltransferase of Acidobacterium capsulatum (strain ATCC 51196 / DSM 11244 / BCRC 80197 / JCM 7670 / NBRC 15755 / NCIMB 13165 / 161).